Reading from the N-terminus, the 158-residue chain is Large ribosomal subunit protein uL11 (158 aa).

Residues 1-28 (MAGTIEALVPGGQATPGPPLGPELGPTP) are disordered.

This sequence belongs to the universal ribosomal protein uL11 family. As to quaternary structure, part of the ribosomal stalk of the 50S ribosomal subunit. Interacts with L10 and the large rRNA to form the base of the stalk. L10 forms an elongated spine to which L12 dimers bind in a sequential fashion forming a multimeric L10(L12)X complex.

Functionally, forms part of the ribosomal stalk which helps the ribosome interact with GTP-bound translation factors. This is Large ribosomal subunit protein uL11 from Halorubrum lacusprofundi (strain ATCC 49239 / DSM 5036 / JCM 8891 / ACAM 34).